The following is a 361-amino-acid chain: sn-glycerol-3-phosphate import ATP-binding protein UgpC (361 aa).

Positions 4–235 (LSLKGVRKSY…PATVFVAGFI (232 aa)) constitute an ABC transporter domain. Residue 37-44 (GPSGCGKS) coordinates ATP.

It belongs to the ABC transporter superfamily. sn-glycerol-3-phosphate importer (TC 3.A.1.1.3) family. As to quaternary structure, the complex is composed of two ATP-binding proteins (UgpC), two transmembrane proteins (UgpA and UgpE) and a solute-binding protein (UgpB).

Its subcellular location is the cell inner membrane. The enzyme catalyses sn-glycerol 3-phosphate(out) + ATP + H2O = sn-glycerol 3-phosphate(in) + ADP + phosphate + H(+). Its function is as follows. Part of the ABC transporter complex UgpBAEC involved in sn-glycerol-3-phosphate (G3P) import. Responsible for energy coupling to the transport system. This chain is sn-glycerol-3-phosphate import ATP-binding protein UgpC, found in Burkholderia lata (strain ATCC 17760 / DSM 23089 / LMG 22485 / NCIMB 9086 / R18194 / 383).